The primary structure comprises 150 residues: Glycine cleavage system H-like protein gcvH2 (150 aa).

A Lipoyl-binding domain is found at 44-126; sequence VATVGLSSFG…PANNWMVKFK (83 aa).

The protein belongs to the GcvH family.

This chain is Glycine cleavage system H-like protein gcvH2 (gcvH2), found in Dictyostelium discoideum (Social amoeba).